The following is a 983-amino-acid chain: Poly [ADP-ribose] polymerase 1 (983 aa).

2 consecutive PARP-type zinc fingers follow at residues 8 to 91 and 114 to 194; these read WRAE…ESGA and YGIE…KKAL. The Zn(2+) site is built by cysteine 20, cysteine 23, histidine 52, cysteine 55, cysteine 126, cysteine 129, histidine 156, and cysteine 159. The segment at 197 to 246 is disordered; that stretch reads AKTETAEARQTNSRAGTKRKNDSVDNEKSKLAKSSFDMSTSGALQPCSKE. Over residues 215–226 the composition is skewed to basic and acidic residues; it reads RKNDSVDNEKSK. The PADR1 zinc-binding domain maps to 236–375; that stretch reads TSGALQPCSK…SVKPKRILRP (140 aa). The tract at residues 301 to 345 is zinc ribbon; sequence GPLALCPMCSGHLSFSGGLYRCHGYISEWSKCSHSTLDPDRIKGK. Zn(2+) is bound by residues cysteine 306, cysteine 309, cysteine 322, and cysteine 332. Positions 369–397 are disordered; it reads PKRILRPVLSGETSQGQGSKDATDSSRSE. The segment covering 379–388 has biased composition (polar residues); the sequence is GETSQGQGSK. The BRCT domain occupies 394–484; the sequence is SRSERLADLK…RKLPFDKYKI (91 aa). In terms of domain architecture, WGR spans 511 to 611; the sequence is HCHILEDGNS…TNFQKQPGKF (101 aa). The PARP alpha-helical domain maps to 633 to 751; that stretch reads SSNLAPSLIE…DIEIASRIVG (119 aa). One can recognise a PARP catalytic domain in the interval 758 to 983; the sequence is ESLDDKYKKL…LLKVRFKHKR (226 aa).

The protein belongs to the ARTD/PARP family.

It localises to the nucleus. The enzyme catalyses NAD(+) + (ADP-D-ribosyl)n-acceptor = nicotinamide + (ADP-D-ribosyl)n+1-acceptor + H(+).. It catalyses the reaction L-aspartyl-[protein] + NAD(+) = 4-O-(ADP-D-ribosyl)-L-aspartyl-[protein] + nicotinamide. It carries out the reaction L-glutamyl-[protein] + NAD(+) = 5-O-(ADP-D-ribosyl)-L-glutamyl-[protein] + nicotinamide. Functionally, involved in the base excision repair (BER) pathway, by catalyzing the poly(ADP-ribosyl)ation of a limited number of acceptor proteins involved in chromatin architecture and in DNA metabolism. This modification follows DNA damages and appears as an obligatory step in a detection/signaling pathway leading to the reparation of DNA strand breaks. In Arabidopsis thaliana (Mouse-ear cress), this protein is Poly [ADP-ribose] polymerase 1 (PARP1).